Consider the following 86-residue polypeptide: Serine protease inhibitor Kazal-type 9 (86 aa).

Residues 1–19 form the signal peptide; the sequence is MRATAIVLLLALTLATMFS. The 61-residue stretch at 26–86 folds into the Kazal-like domain; the sequence is TKQMVDCSHY…TLKFVHFGKC (61 aa). 3 cysteine pairs are disulfide-bonded: Cys-32–Cys-68, Cys-46–Cys-65, and Cys-54–Cys-86.

As to quaternary structure, dimer. Interacts with KLK5 and KLK8. Skin. Highly expressed at sites of hyperkeratosis. Also detected in thymus, tonsils, testis, pancreas, liver, placenta and brain. Expressed at stratum granulosum and stratum corneum at palmar and plantar sites (at protein level).

It is found in the secreted. In terms of biological role, serine protease inhibitor which specifically inhibits KLK5. May contribute to the regulation of the desquamation process in skin by inhibiting KLK5. This chain is Serine protease inhibitor Kazal-type 9 (SPINK9), found in Homo sapiens (Human).